A 399-amino-acid polypeptide reads, in one-letter code: Acetate kinase (399 aa).

Asn-7 provides a ligand contact to Mg(2+). An ATP-binding site is contributed by Lys-14. A substrate-binding site is contributed by Arg-89. Asp-146 serves as the catalytic Proton donor/acceptor. ATP is bound by residues His-206–Gly-210, Asp-280–Arg-282, and Gly-328–Asn-332. Glu-382 contacts Mg(2+).

Belongs to the acetokinase family. In terms of assembly, homodimer. Mg(2+) is required as a cofactor. The cofactor is Mn(2+).

Its subcellular location is the cytoplasm. It carries out the reaction acetate + ATP = acetyl phosphate + ADP. Its pathway is metabolic intermediate biosynthesis; acetyl-CoA biosynthesis; acetyl-CoA from acetate: step 1/2. Its function is as follows. Catalyzes the formation of acetyl phosphate from acetate and ATP. Can also catalyze the reverse reaction. The protein is Acetate kinase of Campylobacter hominis (strain ATCC BAA-381 / DSM 21671 / CCUG 45161 / LMG 19568 / NCTC 13146 / CH001A).